The primary structure comprises 163 residues: HTH-type transcriptional regulator IscR (163 aa).

Positions 2–131 (RLTSKGRYAV…NNITLGELVN (130 aa)) constitute an HTH rrf2-type domain. The H-T-H motif DNA-binding region spans 28–51 (LADISERQGISLSYLEQLFSRLRK). [2Fe-2S] cluster is bound by residues cysteine 92, cysteine 98, and cysteine 104.

[2Fe-2S] cluster is required as a cofactor.

Its function is as follows. Regulates the transcription of several operons and genes involved in the biogenesis of Fe-S clusters and Fe-S-containing proteins. This Klebsiella pneumoniae (strain 342) protein is HTH-type transcriptional regulator IscR.